A 623-amino-acid chain; its full sequence is DELLA protein RHT-1 (623 aa).

A disordered region spans residues 1–27 (MKREYQDAGGSGGGGGGMGSSEDKMMV). Over residues 9–19 (GGSGGGGGGMG) the composition is skewed to gly residues. The DELLA motif motif lies at 38-42 (DELLA). 2 disordered regions span residues 109–138 (LNAP…GYFD) and 159–201 (AGAT…GARS). The span at 111–120 (APPPPLPPAP) shows a compositional bias: pro residues. 2 stretches are compositionally biased toward low complexity: residues 121–131 (QLNASTSSTVT) and 181–201 (GGSS…GARS). A GRAS domain is found at 225–619 (VDTQEAGIRL…RPLIATSAWR (395 aa)). The tract at residues 232 to 288 (IRLVHALLACAEAVQQENLSAAEALVKQIPLLAASQGGAMRKVAAYFGEALARRVFR) is leucine repeat I (LRI). The short motif at 239–243 (LACAE) is the LxCxE motif element. The tract at residues 307-372 (HAHFYESCPY…GGPPSFRLTG (66 aa)) is VHIID. The VHIID motif lies at 338-342 (VHVVD). The interval 386–425 (QVGWKLAQFAHTIRVDFQYRGLVAATLADLEPFMLQPEGE) is leucine repeat II (LRII). The PFYRE stretch occupies residues 435–540 (IAVNSVFEMH…EVYLGRQICN (106 aa)). The segment at 543–619 (ACEGAERTER…RPLIATSAWR (77 aa)) is SAW.

Belongs to the GRAS family. DELLA subfamily. Post-translationally, phosphorylated. In terms of processing, ubiquitinated. Upon GA application it is ubiquitinated, leading to its subsequent degradation.

The protein localises to the nucleus. Probable transcriptional regulator that acts as a repressor of the gibberellin (GA) signaling pathway. Probably acts by participating in large multiprotein complexes that repress transcription of GA-inducible genes. Upon GA application, it is degraded by the proteasome, allowing the GA signaling pathway. This is DELLA protein RHT-1 (RHT1) from Triticum aestivum (Wheat).